A 198-amino-acid polypeptide reads, in one-letter code: Recombination protein RecR (198 aa).

The C4-type zinc-finger motif lies at 57 to 72; the sequence is CEKCNTFTEAQICEVC. The Toprim domain occupies 80-175; the sequence is TLLCVVETPA…AVTRLARGVP (96 aa).

It belongs to the RecR family.

Its function is as follows. May play a role in DNA repair. It seems to be involved in an RecBC-independent recombinational process of DNA repair. It may act with RecF and RecO. This chain is Recombination protein RecR, found in Paraburkholderia xenovorans (strain LB400).